Reading from the N-terminus, the 447-residue chain is ATP-dependent protease ATPase subunit HslU (447 aa).

ATP is bound by residues isoleucine 18, 60-65 (GVGKTE), aspartate 259, glutamate 325, and arginine 397.

This sequence belongs to the ClpX chaperone family. HslU subfamily. In terms of assembly, a double ring-shaped homohexamer of HslV is capped on each side by a ring-shaped HslU homohexamer. The assembly of the HslU/HslV complex is dependent on binding of ATP.

The protein localises to the cytoplasm. Its function is as follows. ATPase subunit of a proteasome-like degradation complex; this subunit has chaperone activity. The binding of ATP and its subsequent hydrolysis by HslU are essential for unfolding of protein substrates subsequently hydrolyzed by HslV. HslU recognizes the N-terminal part of its protein substrates and unfolds these before they are guided to HslV for hydrolysis. This is ATP-dependent protease ATPase subunit HslU from Burkholderia pseudomallei (strain K96243).